The following is a 246-amino-acid chain: Ribonuclease 3 (246 aa).

Residues 16–146 (ATELEAGIGY…LLAAVYLDGG (131 aa)) enclose the RNase III domain. Glutamate 59 contributes to the Mg(2+) binding site. Residue aspartate 63 is part of the active site. Mg(2+) contacts are provided by asparagine 132 and glutamate 135. Glutamate 135 is a catalytic residue. The DRBM domain maps to 173-242 (DFKTEFQEMV…ARQVLARFAA (70 aa)).

This sequence belongs to the ribonuclease III family. In terms of assembly, homodimer. Requires Mg(2+) as cofactor.

The protein localises to the cytoplasm. The enzyme catalyses Endonucleolytic cleavage to 5'-phosphomonoester.. Functionally, digests double-stranded RNA. Involved in the processing of primary rRNA transcript to yield the immediate precursors to the large and small rRNAs (23S and 16S). Processes some mRNAs, and tRNAs when they are encoded in the rRNA operon. Processes pre-crRNA and tracrRNA of type II CRISPR loci if present in the organism. The sequence is that of Ribonuclease 3 from Geobacter metallireducens (strain ATCC 53774 / DSM 7210 / GS-15).